The sequence spans 286 residues: Ribosomal RNA small subunit methyltransferase I (286 aa).

It belongs to the methyltransferase superfamily. RsmI family.

The protein localises to the cytoplasm. The catalysed reaction is cytidine(1402) in 16S rRNA + S-adenosyl-L-methionine = 2'-O-methylcytidine(1402) in 16S rRNA + S-adenosyl-L-homocysteine + H(+). Catalyzes the 2'-O-methylation of the ribose of cytidine 1402 (C1402) in 16S rRNA. The chain is Ribosomal RNA small subunit methyltransferase I from Escherichia coli O157:H7.